Consider the following 304-residue polypeptide: tRNA dimethylallyltransferase (304 aa).

Position 10 to 17 (10 to 17 (GPTASGKT)) interacts with ATP. 12 to 17 (TASGKT) lines the substrate pocket. Interaction with substrate tRNA regions lie at residues 35-38 (DSAL), 159-163 (QRLSR), and 240-245 (RCVGYR).

This sequence belongs to the IPP transferase family. Monomer. It depends on Mg(2+) as a cofactor.

It catalyses the reaction adenosine(37) in tRNA + dimethylallyl diphosphate = N(6)-dimethylallyladenosine(37) in tRNA + diphosphate. Its function is as follows. Catalyzes the transfer of a dimethylallyl group onto the adenine at position 37 in tRNAs that read codons beginning with uridine, leading to the formation of N6-(dimethylallyl)adenosine (i(6)A). This chain is tRNA dimethylallyltransferase, found in Shewanella putrefaciens (strain CN-32 / ATCC BAA-453).